An 88-amino-acid polypeptide reads, in one-letter code: Small ribosomal subunit protein uS15 (88 aa).

Belongs to the universal ribosomal protein uS15 family. As to quaternary structure, part of the 30S ribosomal subunit. Forms a bridge to the 50S subunit in the 70S ribosome, contacting the 23S rRNA.

One of the primary rRNA binding proteins, it binds directly to 16S rRNA where it helps nucleate assembly of the platform of the 30S subunit by binding and bridging several RNA helices of the 16S rRNA. In terms of biological role, forms an intersubunit bridge (bridge B4) with the 23S rRNA of the 50S subunit in the ribosome. This Mycoplasma mobile (strain ATCC 43663 / 163K / NCTC 11711) (Mesomycoplasma mobile) protein is Small ribosomal subunit protein uS15.